We begin with the raw amino-acid sequence, 236 residues long: Small ribosomal subunit protein uS2c (236 aa).

It belongs to the universal ribosomal protein uS2 family.

The protein resides in the plastid. Its subcellular location is the chloroplast. In Oenothera biennis (German evening primrose), this protein is Small ribosomal subunit protein uS2c (rps2).